Here is a 325-residue protein sequence, read N- to C-terminus: Intelectin-2 (325 aa).

An N-terminal signal peptide occupies residues 1–26 (MLSMLRTMTRLCFLLFFSVATSGCSA). The Fibrinogen C-terminal domain maps to 44 to 267 (FSFSSLPRSC…AANALCAGIK (224 aa)). A disulfide bridge links Cys-53 with Cys-82. Positions 98, 99, 101, 104, 109, 110, and 145 each coordinate Ca(2+). Disulfide bonds link Cys-106–Cys-292, Cys-211–Cys-271, and Cys-263–Cys-277. Ca(2+) is bound by residues Asn-272, Glu-274, and Asp-294. Position 274-275 (274-275 (EH)) interacts with a carbohydrate.

Expressed only in the small intestine.

The protein resides in the secreted. Functionally, may play a role in the defense system against pathogens. The chain is Intelectin-2 (ITLN2) from Homo sapiens (Human).